We begin with the raw amino-acid sequence, 254 residues long: Leucyl/phenylalanyl-tRNA--protein transferase (254 aa).

The protein belongs to the L/F-transferase family.

Its subcellular location is the cytoplasm. It carries out the reaction N-terminal L-lysyl-[protein] + L-leucyl-tRNA(Leu) = N-terminal L-leucyl-L-lysyl-[protein] + tRNA(Leu) + H(+). The catalysed reaction is N-terminal L-arginyl-[protein] + L-leucyl-tRNA(Leu) = N-terminal L-leucyl-L-arginyl-[protein] + tRNA(Leu) + H(+). It catalyses the reaction L-phenylalanyl-tRNA(Phe) + an N-terminal L-alpha-aminoacyl-[protein] = an N-terminal L-phenylalanyl-L-alpha-aminoacyl-[protein] + tRNA(Phe). Functions in the N-end rule pathway of protein degradation where it conjugates Leu, Phe and, less efficiently, Met from aminoacyl-tRNAs to the N-termini of proteins containing an N-terminal arginine or lysine. The chain is Leucyl/phenylalanyl-tRNA--protein transferase from Burkholderia cenocepacia (strain HI2424).